The following is a 232-amino-acid chain: 2-C-methyl-D-erythritol 4-phosphate cytidylyltransferase (232 aa).

It belongs to the IspD/TarI cytidylyltransferase family. IspD subfamily.

The enzyme catalyses 2-C-methyl-D-erythritol 4-phosphate + CTP + H(+) = 4-CDP-2-C-methyl-D-erythritol + diphosphate. Its pathway is isoprenoid biosynthesis; isopentenyl diphosphate biosynthesis via DXP pathway; isopentenyl diphosphate from 1-deoxy-D-xylulose 5-phosphate: step 2/6. In terms of biological role, catalyzes the formation of 4-diphosphocytidyl-2-C-methyl-D-erythritol from CTP and 2-C-methyl-D-erythritol 4-phosphate (MEP). The protein is 2-C-methyl-D-erythritol 4-phosphate cytidylyltransferase of Neorickettsia sennetsu (strain ATCC VR-367 / Miyayama) (Ehrlichia sennetsu).